A 308-amino-acid chain; its full sequence is tRNA dimethylallyltransferase (308 aa).

Gly9–Thr16 contributes to the ATP binding site. Thr11–Thr16 contacts substrate. The interval Asp34 to Gln37 is interaction with substrate tRNA.

Belongs to the IPP transferase family. In terms of assembly, monomer. Mg(2+) is required as a cofactor.

The enzyme catalyses adenosine(37) in tRNA + dimethylallyl diphosphate = N(6)-dimethylallyladenosine(37) in tRNA + diphosphate. Its function is as follows. Catalyzes the transfer of a dimethylallyl group onto the adenine at position 37 in tRNAs that read codons beginning with uridine, leading to the formation of N6-(dimethylallyl)adenosine (i(6)A). This Lactobacillus delbrueckii subsp. bulgaricus (strain ATCC BAA-365 / Lb-18) protein is tRNA dimethylallyltransferase.